The sequence spans 211 residues: Probable GTP-binding protein EngB (211 aa).

Residues 26-200 (SGIEVAFAGR…RQKLDNWFST (175 aa)) form the EngB-type G domain. GTP is bound by residues 34-41 (GRSNAGKS), 61-65 (GRTQL), 79-82 (DLPG), 146-149 (TKAD), and 179-181 (FSS). Mg(2+)-binding residues include serine 41 and threonine 63.

It belongs to the TRAFAC class TrmE-Era-EngA-EngB-Septin-like GTPase superfamily. EngB GTPase family. The cofactor is Mg(2+).

Its function is as follows. Necessary for normal cell division and for the maintenance of normal septation. This Pectobacterium carotovorum subsp. carotovorum (strain PC1) protein is Probable GTP-binding protein EngB.